The following is a 121-amino-acid chain: Large ribosomal subunit protein eL18 (121 aa).

This sequence belongs to the eukaryotic ribosomal protein eL18 family.

The sequence is that of Large ribosomal subunit protein eL18 from Methanospirillum hungatei JF-1 (strain ATCC 27890 / DSM 864 / NBRC 100397 / JF-1).